Reading from the N-terminus, the 318-residue chain is NADH-ubiquinone oxidoreductase chain 1 (318 aa).

A run of 8 helical transmembrane segments spans residues 2-22 (FLIN…FLTL), 69-89 (FLFT…WAPL), 102-122 (LLFI…SGWA), 146-166 (MTTI…TAFA), 171-191 (HLWL…STLA), 222-242 (LFFM…VILF), 253-273 (EIST…FLWV), and 294-314 (LPLT…LACI).

This sequence belongs to the complex I subunit 1 family.

The protein resides in the mitochondrion inner membrane. It catalyses the reaction a ubiquinone + NADH + 5 H(+)(in) = a ubiquinol + NAD(+) + 4 H(+)(out). Its function is as follows. Core subunit of the mitochondrial membrane respiratory chain NADH dehydrogenase (Complex I) that is believed to belong to the minimal assembly required for catalysis. Complex I functions in the transfer of electrons from NADH to the respiratory chain. The immediate electron acceptor for the enzyme is believed to be ubiquinone. The polypeptide is NADH-ubiquinone oxidoreductase chain 1 (MT-ND1) (Mammuthus primigenius (Siberian woolly mammoth)).